Reading from the N-terminus, the 334-residue chain is Eukaryotic translation initiation factor 3 subunit H (334 aa).

Positions 20–152 (VQCDGLAAMK…LKAYRLTPQA (133 aa)) constitute an MPN domain.

Belongs to the eIF-3 subunit H family. As to quaternary structure, component of the eukaryotic translation initiation factor 3 (eIF-3) complex.

Its subcellular location is the cytoplasm. Component of the eukaryotic translation initiation factor 3 (eIF-3) complex, which is involved in protein synthesis of a specialized repertoire of mRNAs and, together with other initiation factors, stimulates binding of mRNA and methionyl-tRNAi to the 40S ribosome. The eIF-3 complex specifically targets and initiates translation of a subset of mRNAs involved in cell proliferation. In Anopheles gambiae (African malaria mosquito), this protein is Eukaryotic translation initiation factor 3 subunit H.